The following is a 147-amino-acid chain: Probable WRKY transcription factor 45 (147 aa).

The segment at 21–52 (TEFHGVDNSAQPTTSSEEKPRSKKKKKEREAR) is disordered. The segment at residues 59 to 124 (SQVDILDDGY…YQGVHTHAVD (66 aa)) is a DNA-binding region (WRKY). Zn(2+)-binding residues include Cys-90, Cys-95, His-119, and His-121.

It belongs to the WRKY group I family.

Its subcellular location is the nucleus. Functionally, transcription factor. Interacts specifically with the W box (5'-(T)TGAC[CT]-3'), a frequently occurring elicitor-responsive cis-acting element. The polypeptide is Probable WRKY transcription factor 45 (WRKY45) (Arabidopsis thaliana (Mouse-ear cress)).